The following is a 299-amino-acid chain: Lipoyl synthase (299 aa).

Cys45, Cys50, Cys56, Cys71, Cys75, Cys78, and Ser284 together coordinate [4Fe-4S] cluster. One can recognise a Radical SAM core domain in the interval 57 to 273; sequence YSKGTATFMI…GDVALAKDFL (217 aa).

This sequence belongs to the radical SAM superfamily. Lipoyl synthase family. Requires [4Fe-4S] cluster as cofactor.

The protein localises to the cytoplasm. The catalysed reaction is [[Fe-S] cluster scaffold protein carrying a second [4Fe-4S](2+) cluster] + N(6)-octanoyl-L-lysyl-[protein] + 2 oxidized [2Fe-2S]-[ferredoxin] + 2 S-adenosyl-L-methionine + 4 H(+) = [[Fe-S] cluster scaffold protein] + N(6)-[(R)-dihydrolipoyl]-L-lysyl-[protein] + 4 Fe(3+) + 2 hydrogen sulfide + 2 5'-deoxyadenosine + 2 L-methionine + 2 reduced [2Fe-2S]-[ferredoxin]. It functions in the pathway protein modification; protein lipoylation via endogenous pathway; protein N(6)-(lipoyl)lysine from octanoyl-[acyl-carrier-protein]: step 2/2. Its function is as follows. Catalyzes the radical-mediated insertion of two sulfur atoms into the C-6 and C-8 positions of the octanoyl moiety bound to the lipoyl domains of lipoate-dependent enzymes, thereby converting the octanoylated domains into lipoylated derivatives. This Desulfotalea psychrophila (strain LSv54 / DSM 12343) protein is Lipoyl synthase.